The chain runs to 162 residues: ATP synthase subunit b (162 aa).

A helical membrane pass occupies residues 8–28 (LTGIIQLLNFLILLFVLYKFL).

The protein belongs to the ATPase B chain family. In terms of assembly, F-type ATPases have 2 components, F(1) - the catalytic core - and F(0) - the membrane proton channel. F(1) has five subunits: alpha(3), beta(3), gamma(1), delta(1), epsilon(1). F(0) has three main subunits: a(1), b(2) and c(10-14). The alpha and beta chains form an alternating ring which encloses part of the gamma chain. F(1) is attached to F(0) by a central stalk formed by the gamma and epsilon chains, while a peripheral stalk is formed by the delta and b chains.

The protein resides in the cell inner membrane. Functionally, f(1)F(0) ATP synthase produces ATP from ADP in the presence of a proton or sodium gradient. F-type ATPases consist of two structural domains, F(1) containing the extramembraneous catalytic core and F(0) containing the membrane proton channel, linked together by a central stalk and a peripheral stalk. During catalysis, ATP synthesis in the catalytic domain of F(1) is coupled via a rotary mechanism of the central stalk subunits to proton translocation. Its function is as follows. Component of the F(0) channel, it forms part of the peripheral stalk, linking F(1) to F(0). The chain is ATP synthase subunit b from Pseudothermotoga lettingae (strain ATCC BAA-301 / DSM 14385 / NBRC 107922 / TMO) (Thermotoga lettingae).